Reading from the N-terminus, the 702-residue chain is Polyribonucleotide nucleotidyltransferase (702 aa).

Mg(2+) is bound by residues D485 and D491. One can recognise a KH domain in the interval 552-612; it reads PRTEIICIDP…EGVKKAISII (61 aa). The 69-residue stretch at 622–690 folds into the S1 motif domain; it reads GEIYLGKVTK…NQGRINLSRK (69 aa).

It belongs to the polyribonucleotide nucleotidyltransferase family. It depends on Mg(2+) as a cofactor.

The protein localises to the cytoplasm. The enzyme catalyses RNA(n+1) + phosphate = RNA(n) + a ribonucleoside 5'-diphosphate. In terms of biological role, involved in mRNA degradation. Catalyzes the phosphorolysis of single-stranded polyribonucleotides processively in the 3'- to 5'-direction. This Clostridium botulinum (strain Kyoto / Type A2) protein is Polyribonucleotide nucleotidyltransferase.